Here is a 246-residue protein sequence, read N- to C-terminus: Ribonuclease 3 (246 aa).

One can recognise an RNase III domain in the interval 18 to 147; sequence FQELQNKIGI…FIGALYLDQG (130 aa). E60 contacts Mg(2+). Residue D64 is part of the active site. D133 and E136 together coordinate Mg(2+). The active site involves E136. The region spanning 173-242 is the DRBM domain; that stretch reads DFKSQLQELV…AQMALETLRA (70 aa).

This sequence belongs to the ribonuclease III family. Homodimer. Requires Mg(2+) as cofactor.

It localises to the cytoplasm. The enzyme catalyses Endonucleolytic cleavage to 5'-phosphomonoester.. Its function is as follows. Digests double-stranded RNA. Involved in the processing of primary rRNA transcript to yield the immediate precursors to the large and small rRNAs (23S and 16S). Processes some mRNAs, and tRNAs when they are encoded in the rRNA operon. Processes pre-crRNA and tracrRNA of type II CRISPR loci if present in the organism. The polypeptide is Ribonuclease 3 (Geobacillus kaustophilus (strain HTA426)).